The following is a 677-amino-acid chain: Polyunsaturated fatty acid lipoxygenase ALOX8 (677 aa).

Residues 2-125 enclose the PLAT domain; sequence AKCRVRVSTG…ELVLREGAAK (124 aa). Residues Gly-15, Gly-17, Asp-39, His-40, Gly-42, Glu-44, Asp-86, and Ala-87 each coordinate Ca(2+). The Lipoxygenase domain maps to 126 to 677; it reads VSWQDHHPTL…PPLIENSVSI (552 aa). Fe cation-binding residues include His-374, His-379, His-554, and Ile-677.

This sequence belongs to the lipoxygenase family. Fe cation is required as a cofactor. In terms of tissue distribution, expressed in epidermis and brain. No expression found in heart, spleen, liver, skeletal muscle, kidney or testis.

It is found in the cytoplasm. Its subcellular location is the cytosol. It localises to the membrane. It catalyses the reaction (9Z,12Z)-octadecadienoate + O2 = (9S)-hydroperoxy-(10E,12Z)-octadecadienoate. It carries out the reaction (5Z,8Z,11Z,14Z)-eicosatetraenoate + O2 = (8S)-hydroperoxy-(5Z,9E,11Z,14Z)-eicosatetraenoate. The enzyme catalyses (15S)-hydroperoxy-(5Z,8Z,11Z,13E)-eicosatetraenoate + O2 = (8S,15S)-dihydroperoxy-(5Z,9E,11Z,13E)-eicosatetraenoate. The catalysed reaction is (8S)-hydroperoxy-(5Z,9E,11Z,14Z)-eicosatetraenoate + O2 = (8S,15S)-dihydroperoxy-(5Z,9E,11Z,13E)-eicosatetraenoate. It catalyses the reaction 1-octadecanoyl-2-(5Z,8Z,11Z,14Z-eicosatetraenoyl)-sn-glycero-3-phosphocholine + O2 = 1-octadecanoyl-2-(15-hydroperoxy-5Z,8Z,11Z,13E-eicosatetraenoyl)-sn-glycero-3-phosphocholine. It carries out the reaction a 1-acyl-2-(5Z,8Z,11Z,14Z-eicosatetraenoyl)-sn-glycero-3-phospho-(1D-myo-inositol) + O2 = a 1-acyl-2-(15-hydroperoxy-5Z,8Z,11Z,13E-eicosatetraenoyl)-sn-glycero-3-phospho-(1D-myo-inositol). The enzyme catalyses a 1-acyl-2-(8Z,11Z,14Z-eicosatrienoyl)-sn-glycero-3-phospho-(1D-myo-inositol) + O2 = a 1-acyl-2-(15-hydroperoxy-8Z,11Z,13E-eicosatrienoyl)-sn-glycero-3-phospho-(1D-myo-inositol). The catalysed reaction is (5Z,8Z,11Z,14Z)-eicosatetraenoate + O2 = 9-hydroperoxy-(5Z,7E,11Z,14Z)-eicosatetraenoate. It catalyses the reaction (5Z,8Z,11Z,14Z)-eicosatetraenoate + O2 = 11-hydroperoxy-(5Z,8Z,12E,14Z)-eicosatetraenoate. It carries out the reaction (8Z,11Z,14Z)-eicosatrienoate + O2 = 15-hydroperoxy-(8Z,11Z,13E)-eicosatrienoate. It functions in the pathway lipid metabolism; hydroperoxy eicosatetraenoic acid biosynthesis. Its function is as follows. Non-heme iron-containing dioxygenase that catalyzes the stereo-specific peroxidation of free and esterified polyunsaturated fatty acids generating a spectrum of bioactive lipid mediators. Catalyzes the peroxidation of arachidonate and linoleate into (8S)-HPETE and (9S)-HPODE respectively. In addition to generate (8S)-HPETE from free arachidonic acid (AA), may produce other HETE isomers from phospholipid-esterified polyunsaturated fatty acids and minor products derived from (8S)-HPETE itself that may include leukotriene A4 and 8,15-diHPETE. With free arachidonate as substrate, has no detectable 15S-lipoxygenase activity and only displays a 8S-lipoxygenase activity. However may have a 15S-lipoxygenase activity with (8S)-HPETE to produce (8S,15S)-diHPETE and when oxidizes directly arachidonic acid esterified to membrane-bound phospholipids to produce a phospholipid-esterified 15-HpETE. May also catalyze (15S)-HPETE peroxidation to produce 8,15-diHPETE. May play a role in keratinocyte differentiation through activation of the peroxisome proliferator activated receptor signaling pathway. This is Polyunsaturated fatty acid lipoxygenase ALOX8 from Mus musculus (Mouse).